The chain runs to 208 residues: Large ribosomal subunit protein uL3 (208 aa).

Glutamine 149 carries the post-translational modification N5-methylglutamine.

It belongs to the universal ribosomal protein uL3 family. In terms of assembly, part of the 50S ribosomal subunit. Forms a cluster with proteins L14 and L19. Methylated by PrmB.

In terms of biological role, one of the primary rRNA binding proteins, it binds directly near the 3'-end of the 23S rRNA, where it nucleates assembly of the 50S subunit. In Mannheimia succiniciproducens (strain KCTC 0769BP / MBEL55E), this protein is Large ribosomal subunit protein uL3.